The sequence spans 206 residues: Methylthioribulose-1-phosphate dehydratase (206 aa).

Positions 96 and 98 each coordinate Zn(2+).

It belongs to the aldolase class II family. MtnB subfamily. Zn(2+) serves as cofactor.

It carries out the reaction 5-(methylsulfanyl)-D-ribulose 1-phosphate = 5-methylsulfanyl-2,3-dioxopentyl phosphate + H2O. It functions in the pathway amino-acid biosynthesis; L-methionine biosynthesis via salvage pathway; L-methionine from S-methyl-5-thio-alpha-D-ribose 1-phosphate: step 2/6. Catalyzes the dehydration of methylthioribulose-1-phosphate (MTRu-1-P) into 2,3-diketo-5-methylthiopentyl-1-phosphate (DK-MTP-1-P). The chain is Methylthioribulose-1-phosphate dehydratase from Azotobacter vinelandii (strain DJ / ATCC BAA-1303).